Consider the following 720-residue polypeptide: DNA replication licensing factor mcm7 (720 aa).

The C4-type zinc-finger motif lies at 183-210; that stretch reads CDQCGAETYQPIQSPTFMPLIMCPSREC. The 207-residue stretch at 331–537 folds into the MCM domain; the sequence is FYEKLAASIA…NDLRLAQHIT (207 aa). The ATP site is built by Y344, G383, A385, K386, S387, N488, R513, and R603. Positions 512 to 515 match the Arginine finger motif; sequence SRFD.

It belongs to the MCM family. Component of the mcm2-7 complex (RLF-M). The complex forms a toroidal hexameric ring with the proposed subunit order mcm2-mcm6-mcm4-mcm7-mcm3-mcm5. The heterodimer of mmcm3/mcm5 interacts with mcm4, mmcm6, mcm7 and weakly with mcm2. The N-terminus is required for interaction with mmcm3, though this interaction may not be direct, and remains in a complex with mmcm3 throughout the cell cycle. Begins to associate with zmcm6 at the neurula stage. Component of the replisome complex. Component of the CMG helicase complex, composed of the mcm2-7 complex, the GINS complex and cdc45. In terms of processing, ubiquitinated by traip when forks converge following formation of DNA interstrand cross-links. Short ubiquitin chains on mcm7 promote recruitment of DNA glycosylase neil3. If the interstrand cross-link cannot be cleaved by neil3, the ubiquitin chains continue to grow on mcm7, promoting the unloading of the CMG helicase complex by the vcp/p97 ATPase.

It is found in the nucleus. Its subcellular location is the chromosome. The catalysed reaction is ATP + H2O = ADP + phosphate + H(+). Functionally, acts as a component of the mcm2-7 complex (mcm complex) which is the putative replicative helicase essential for 'once per cell cycle' DNA replication initiation and elongation in eukaryotic cells. The active ATPase sites in the mcm2-7 ring are formed through the interaction surfaces of two neighboring subunits such that a critical structure of a conserved arginine finger motif is provided in trans relative to the ATP-binding site of the Walker A box of the adjacent subunit. The six ATPase active sites, however, are likely to contribute differentially to the complex helicase activity. The existence of maternal and zygotic forms of mcm3 and mcm6 suggests that specific forms of mcm2-7 complexes may be used during different stages of development. The polypeptide is DNA replication licensing factor mcm7 (Xenopus tropicalis (Western clawed frog)).